Reading from the N-terminus, the 333-residue chain is Transcription termination factor MTERF6, chloroplastic/mitochondrial (333 aa).

This sequence belongs to the mTERF family.

It localises to the plastid. The protein resides in the chloroplast. Its subcellular location is the mitochondrion. Its function is as follows. Transcription termination factor essential for chloroplast development. Required for maturation of 16S rRNA, 18S rRNA and 23S rRNA in the chloroplast. Binds to a specific region within the tRNA(Ile)(GAU) gene at a position adjacent to and downstream of the 16S rRNA gene. Required for the maturation of tRNA(Ile)(GAU). Binds to double-stranded DNA. This chain is Transcription termination factor MTERF6, chloroplastic/mitochondrial, found in Arabidopsis thaliana (Mouse-ear cress).